A 557-amino-acid chain; its full sequence is Potassium-transporting ATPase potassium-binding subunit (557 aa).

12 consecutive transmembrane segments (helical) span residues Gly5–Ser25, Leu63–Gly83, Gly132–Ile152, Leu170–Ile190, Phe253–Val273, Leu283–Val303, Val329–Ala349, Ala356–Val376, Gly379–Gly399, Leu416–Met436, Leu484–Ala504, and Leu526–Ala546.

It belongs to the KdpA family. The system is composed of three essential subunits: KdpA, KdpB and KdpC.

The protein localises to the cell inner membrane. Functionally, part of the high-affinity ATP-driven potassium transport (or Kdp) system, which catalyzes the hydrolysis of ATP coupled with the electrogenic transport of potassium into the cytoplasm. This subunit binds the periplasmic potassium ions and delivers the ions to the membrane domain of KdpB through an intramembrane tunnel. This Escherichia coli O6:K15:H31 (strain 536 / UPEC) protein is Potassium-transporting ATPase potassium-binding subunit.